A 718-amino-acid chain; its full sequence is Effector protein hopM1 (718 aa).

The span at 1–10 (MIGTRVGGSG) shows a compositional bias: gly residues. 2 disordered regions span residues 1–63 (MIGT…ARLP) and 683–718 (GVSS…GRRR). Positions 11-22 (STEIVQANQPQP) are enriched in polar residues. Residues 44-60 (ASQSAAQAPESSAAGAA) are compositionally biased toward low complexity.

In terms of assembly, interacts with the chaperone ShcM.

Its subcellular location is the secreted. The protein localises to the host membrane. Its function is as follows. Involved in the suppression of basal resistance and promotion of disease symptoms in plants. May be involved in the inhibition of a host vesicle trafficking pathway. This chain is Effector protein hopM1 (hopM1), found in Pseudomonas syringae pv. syringae (strain B728a).